We begin with the raw amino-acid sequence, 51 residues long: VTVDCSGYPKPACTLEYFPLCGSDNQTYANKCAFCNAVVEKNVTLRHLGKC.

The Kazal-like domain maps to 3–51 (VDCSGYPKPACTLEYFPLCGSDNQTYANKCAFCNAVVEKNVTLRHLGKC). 3 disulfides stabilise this stretch: cysteine 5/cysteine 35, cysteine 13/cysteine 32, and cysteine 21/cysteine 51. A glycan (N-linked (GlcNAc...) asparagine) is linked at asparagine 42.

Its subcellular location is the secreted. In Nothoprocta cinerascens (Brushland tinamou), this protein is Ovomucoid.